The sequence spans 309 residues: MSTQPSHRLYILDTDLSTNVSTRHGRIISCRPDGSDLRTVVDGIKNLPDGIVVDHDRGLMYWTSMGTSLSAEGGSIERAKLDGSDHKTIIASGTVGVFTPKQITLARRSGKLYWCDREGMKVMRANTDGSGVEVLWSTGNAAEEDDRRDQMRWCVGVGVDEERGFVYWTQKGPSKGGKGRVFRGPLSQSPFSPDDVEVLIDGLPEPIDLEVDEQSGTLYWTDRGDPPTGNSLNCVSIADVEGVMNGTARGQVRTLARRLHETIGLALDKSGGVCYVTDLAGGVYAVDIKSGQKTVIFSELGDTTGIALV.

The protein belongs to the LDLR family.

The protein resides in the endoplasmic reticulum. It localises to the golgi apparatus. Its subcellular location is the endosome. Involved in endocytosis, fatty acid beta-oxidation and infectious growth. Plays a critical role in the accumulation of MSN2 from the cytosol to the nucleus by activating the cyclic AMP signaling pathway. MSN2 can then target the dienoyl-coenzyme A isomerase DCI1 and other genes involved in fatty acid beta-oxidation, which is important for lipid droplets degradation and infectious growth. The sequence is that of Low-density lipoprotein receptor-related protein 1 from Pyricularia oryzae (strain 70-15 / ATCC MYA-4617 / FGSC 8958) (Rice blast fungus).